A 416-amino-acid chain; its full sequence is Protein-glutamine gamma-glutamyltransferase (416 aa).

A signal peptide (tat-type signal) is located at residues 1–29 (MHKRRRLLAFATVGAVICTAGFTPSVSQA). A propeptide spanning residues 30–85 (ASSGDGEEKGSYAETHGLTADDVESINALNERALTLGQPGKPPKELPPSASAPSRA) is cleaved from the precursor. A disordered region spans residues 64–103 (TLGQPGKPPKELPPSASAPSRAPSDDRETPPAEPLDRMPE). Residues 76-85 (PPSASAPSRA) are compositionally biased toward low complexity. Residues 86–103 (PSDDRETPPAEPLDRMPE) show a composition bias toward basic and acidic residues. Cys149 is a catalytic residue. The interval 290-331 (GQDQRGSSDKRKYGDPEAFRPDQGTGLVDMSKDRSIPRSPAK) is disordered. The span at 295-309 (GSSDKRKYGDPEAFR) shows a compositional bias: basic and acidic residues. Active-site residues include Asp340 and His359.

It belongs to the bacterial TGase family. Predicted to be exported by the Tat system. The position of the signal peptide cleavage has not been experimentally proven.

The catalysed reaction is L-glutaminyl-[protein] + L-lysyl-[protein] = [protein]-L-lysyl-N(6)-5-L-glutamyl-[protein] + NH4(+). Catalyzes the cross-linking of proteins and the conjugation of polyamines to proteins. This is Protein-glutamine gamma-glutamyltransferase from Streptomyces cinnamoneus (Streptoverticillium cinnamoneum).